A 96-amino-acid chain; its full sequence is Co-chaperonin GroES (96 aa).

It belongs to the GroES chaperonin family. Heptamer of 7 subunits arranged in a ring. Interacts with the chaperonin GroEL.

The protein resides in the cytoplasm. Functionally, together with the chaperonin GroEL, plays an essential role in assisting protein folding. The GroEL-GroES system forms a nano-cage that allows encapsulation of the non-native substrate proteins and provides a physical environment optimized to promote and accelerate protein folding. GroES binds to the apical surface of the GroEL ring, thereby capping the opening of the GroEL channel. The polypeptide is Co-chaperonin GroES (Shewanella halifaxensis (strain HAW-EB4)).